Consider the following 414-residue polypeptide: Putative competence-damage inducible protein (414 aa).

Belongs to the CinA family.

This chain is Putative competence-damage inducible protein, found in Limosilactobacillus fermentum (strain NBRC 3956 / LMG 18251) (Lactobacillus fermentum).